The primary structure comprises 374 residues: uncharacterized protein (374 aa).

The interval 1 to 46 (MVNEEEKDLTAEGDSNNTGVSPDSIKNKTLDFYPKEKTTERKTRSR) is disordered. Residues 25–46 (IKNKTLDFYPKEKTTERKTRSR) are compositionally biased toward basic and acidic residues. 6 helical membrane passes run 70–90 (YAYIIFAAFLGMASYDYFIAA), 127–147 (WVFYFVFNIPLFIFGVIKIGI), 153–173 (TIVYIGLQNGFHFAFAYIPVI), 199–219 (IWLFVFAAVAGILNGIAYGLV), 242–262 (ISIANYNRIVNYIIIVVMLAI), and 312–332 (YFFGPALFASYLFVVVQAITI).

The protein to M.genitalium MG432 and MG443.

The protein resides in the cell membrane. This is an uncharacterized protein from Spiroplasma citri.